We begin with the raw amino-acid sequence, 194 residues long: dTTP/UTP pyrophosphatase (194 aa).

Catalysis depends on D77, which acts as the Proton acceptor.

It belongs to the Maf family. YhdE subfamily. A divalent metal cation is required as a cofactor.

Its subcellular location is the cytoplasm. It carries out the reaction dTTP + H2O = dTMP + diphosphate + H(+). The catalysed reaction is UTP + H2O = UMP + diphosphate + H(+). Its function is as follows. Nucleoside triphosphate pyrophosphatase that hydrolyzes dTTP and UTP. May have a dual role in cell division arrest and in preventing the incorporation of modified nucleotides into cellular nucleic acids. The polypeptide is dTTP/UTP pyrophosphatase (Flavobacterium johnsoniae (strain ATCC 17061 / DSM 2064 / JCM 8514 / BCRC 14874 / CCUG 350202 / NBRC 14942 / NCIMB 11054 / UW101) (Cytophaga johnsonae)).